A 459-amino-acid chain; its full sequence is Sulfite oxidase (459 aa).

Positions 4–83 constitute a Cytochrome b5 heme-binding domain; that stretch reads YPRYTREEVG…LQQYKVGELS (80 aa). Positions 40, 65, and 69 each coordinate heme b. Residues 83–115 are disordered; the sequence is SPDEAPAAPDAQDPFAGDPPRHPGLRVNSQKPF. Residues 85–100 show a composition bias toward low complexity; it reads DEAPAAPDAQDPFAGD. Positions 86–95 are hinge; that stretch reads EAPAAPDAQD. The interval 96 to 323 is moco domain; the sequence is PFAGDPPRHP…PSRWQQNDYK (228 aa). Mo-molybdopterin is bound by residues 136–140, C185, D244, H283, R288, and 299–301; these read FTRNH and SVK. The homodimerization stretch occupies residues 324 to 459; it reads GFSPCVDWDT…RGVLSTAWHR (136 aa).

As to quaternary structure, homodimer. The cofactor is heme b. It depends on Mo-molybdopterin as a cofactor.

It is found in the mitochondrion intermembrane space. The catalysed reaction is sulfite + O2 + H2O = sulfate + H2O2. It functions in the pathway energy metabolism; sulfur metabolism. Its function is as follows. Catalyzes the oxidation of sulfite to sulfate, the terminal reaction in the oxidative degradation of sulfur-containing amino acids. In Gallus gallus (Chicken), this protein is Sulfite oxidase (SUOX).